Reading from the N-terminus, the 431-residue chain is Glutamyl-tRNA reductase (431 aa).

Residues 49-52 (TCNR), Ser109, 114-116 (EGQ), and Gln120 contribute to the substrate site. Cys50 acts as the Nucleophile in catalysis. 189–194 (GAGKMS) provides a ligand contact to NADP(+).

Belongs to the glutamyl-tRNA reductase family. In terms of assembly, homodimer.

It catalyses the reaction (S)-4-amino-5-oxopentanoate + tRNA(Glu) + NADP(+) = L-glutamyl-tRNA(Glu) + NADPH + H(+). It functions in the pathway porphyrin-containing compound metabolism; protoporphyrin-IX biosynthesis; 5-aminolevulinate from L-glutamyl-tRNA(Glu): step 1/2. The protein operates within porphyrin-containing compound metabolism; chlorophyll biosynthesis. Its function is as follows. Catalyzes the NADPH-dependent reduction of glutamyl-tRNA(Glu) to glutamate 1-semialdehyde (GSA). In Trichodesmium erythraeum (strain IMS101), this protein is Glutamyl-tRNA reductase.